The following is a 428-amino-acid chain: Enolase (428 aa).

Glutamine 163 contacts (2R)-2-phosphoglycerate. Glutamate 205 serves as the catalytic Proton donor. The Mg(2+) site is built by aspartate 242, glutamate 285, and aspartate 312. Residues lysine 337, arginine 366, serine 367, and lysine 388 each contribute to the (2R)-2-phosphoglycerate site. The Proton acceptor role is filled by lysine 337.

The protein belongs to the enolase family. Requires Mg(2+) as cofactor.

The protein resides in the cytoplasm. Its subcellular location is the secreted. It localises to the cell surface. It catalyses the reaction (2R)-2-phosphoglycerate = phosphoenolpyruvate + H2O. It participates in carbohydrate degradation; glycolysis; pyruvate from D-glyceraldehyde 3-phosphate: step 4/5. Its function is as follows. Catalyzes the reversible conversion of 2-phosphoglycerate (2-PG) into phosphoenolpyruvate (PEP). It is essential for the degradation of carbohydrates via glycolysis. The polypeptide is Enolase (Rhodopirellula baltica (strain DSM 10527 / NCIMB 13988 / SH1)).